The chain runs to 245 residues: Precorrin-2 C(20)-methyltransferase (245 aa).

Belongs to the precorrin methyltransferase family. In terms of assembly, homodimer.

It catalyses the reaction precorrin-2 + S-adenosyl-L-methionine = precorrin-3A + S-adenosyl-L-homocysteine + H(+). Its pathway is cofactor biosynthesis; adenosylcobalamin biosynthesis; cob(II)yrinate a,c-diamide from precorrin-2 (aerobic route): step 1/10. In terms of biological role, methylates precorrin-2 at the C-20 position to produce precorrin-3A. The protein is Precorrin-2 C(20)-methyltransferase (cobI) of Sinorhizobium sp.